The following is a 215-amino-acid chain: Riboflavin synthase (215 aa).

Lumazine-binding repeat units follow at residues 1-96 (MFTG…FGGH) and 97-193 (IVSG…EQFL). Residues 4 to 6 (GII), 47 to 49 (CLT), 61 to 66 (DVMSET), 100 to 102 (GHI), Lys135, 144 to 146 (SLT), and 158 to 163 (SIIPHT) contribute to the 2,4-dihydroxypteridine site.

Homotrimer.

It catalyses the reaction 2 6,7-dimethyl-8-(1-D-ribityl)lumazine + H(+) = 5-amino-6-(D-ribitylamino)uracil + riboflavin. The protein operates within cofactor biosynthesis; riboflavin biosynthesis; riboflavin from 2-hydroxy-3-oxobutyl phosphate and 5-amino-6-(D-ribitylamino)uracil: step 2/2. In terms of biological role, catalyzes the dismutation of two molecules of 6,7-dimethyl-8-ribityllumazine, resulting in the formation of riboflavin and 5-amino-6-(D-ribitylamino)uracil. The protein is Riboflavin synthase (ribE) of Actinobacillus pleuropneumoniae (Haemophilus pleuropneumoniae).